The sequence spans 1059 residues: Protein cappuccino (1059 aa).

2 stretches are compositionally biased toward polar residues: residues 62 to 80 and 90 to 123; these read AAVT…NESG and ATTS…SAAS. Disordered stretches follow at residues 62 to 146 and 448 to 647; these read AAVT…GTPT and QTES…TAPP. Residues 133-142 are compositionally biased toward pro residues; that stretch reads LPLPPPPPGF. Over residues 468–481 the composition is skewed to basic and acidic residues; the sequence is SDNESAKEDGEKPH. The region spanning 480 to 560 is the FH1 domain; it reads PHAVAPPPPP…PPPPMSASPS (81 aa). A compositionally biased stretch (pro residues) spans 483–541; it reads VAPPPPPPPPPLHAFVAPPPPPPPPPPPPPPLANYGAPPPPPPPPPGSGSAPPPPPPAP. The FH2 domain maps to 585–1032; it reads RKSAVNPPKP…KKSKQAQIES (448 aa). The segment covering 620–629 has biased composition (polar residues); it reads TDSTENSGSS. An important for interaction with spir region spans residues 1049 to 1059; it reads KERMLMRRSKN.

The protein belongs to the formin homology family. Cappuccino subfamily. As to quaternary structure, interacts with wash. Interacts with spir.

It localises to the cytoplasm. It is found in the cytoskeleton. The protein resides in the cytosol. Its subcellular location is the membrane. The protein localises to the cytoplasmic vesicle membrane. Acts as an actin nucleation factor and promotes assembly of actin filaments together with spir. May play a role in intracellular vesicle transport along actin fibers, providing a novel link between actin cytoskeleton dynamics and intracellular transport. In Drosophila melanogaster (Fruit fly), this protein is Protein cappuccino (capu).